Here is a 955-residue protein sequence, read N- to C-terminus: Protein translocase subunit SecA (955 aa).

ATP contacts are provided by residues Q90, 108-112, and D509; that span reads GEGKT. Positions 537–571 are disordered; that stretch reads EGHRPPVPLQRSGAEGGGGFAAKAAPASGPHGHAP. Positions 557 to 571 are enriched in low complexity; the sequence is AAKAAPASGPHGHAP.

It belongs to the SecA family. As to quaternary structure, monomer and homodimer. Part of the essential Sec protein translocation apparatus which comprises SecA, SecYEG and auxiliary proteins SecDF. Other proteins may also be involved.

The protein localises to the cell inner membrane. Its subcellular location is the cellular thylakoid membrane. It localises to the cytoplasm. The catalysed reaction is ATP + H2O + cellular proteinSide 1 = ADP + phosphate + cellular proteinSide 2.. In terms of biological role, part of the Sec protein translocase complex. Interacts with the SecYEG preprotein conducting channel. Has a central role in coupling the hydrolysis of ATP to the transfer of proteins into and across the cell membrane, serving as an ATP-driven molecular motor driving the stepwise translocation of polypeptide chains across the membrane. Functionally, probably participates in protein translocation into and across both the cytoplasmic and thylakoid membranes in cyanobacterial cells. The chain is Protein translocase subunit SecA from Synechococcus sp. (strain WH7803).